Reading from the N-terminus, the 204-residue chain is Leucyl/phenylalanyl-tRNA--protein transferase (204 aa).

This sequence belongs to the L/F-transferase family.

It localises to the cytoplasm. It catalyses the reaction N-terminal L-lysyl-[protein] + L-leucyl-tRNA(Leu) = N-terminal L-leucyl-L-lysyl-[protein] + tRNA(Leu) + H(+). The enzyme catalyses N-terminal L-arginyl-[protein] + L-leucyl-tRNA(Leu) = N-terminal L-leucyl-L-arginyl-[protein] + tRNA(Leu) + H(+). The catalysed reaction is L-phenylalanyl-tRNA(Phe) + an N-terminal L-alpha-aminoacyl-[protein] = an N-terminal L-phenylalanyl-L-alpha-aminoacyl-[protein] + tRNA(Phe). Functions in the N-end rule pathway of protein degradation where it conjugates Leu, Phe and, less efficiently, Met from aminoacyl-tRNAs to the N-termini of proteins containing an N-terminal arginine or lysine. In Brucella anthropi (strain ATCC 49188 / DSM 6882 / CCUG 24695 / JCM 21032 / LMG 3331 / NBRC 15819 / NCTC 12168 / Alc 37) (Ochrobactrum anthropi), this protein is Leucyl/phenylalanyl-tRNA--protein transferase.